We begin with the raw amino-acid sequence, 454 residues long: Probable diacyglycerol O-acyltransferase tgs2 (454 aa).

Histidine 139 functions as the Proton acceptor in the catalytic mechanism.

The protein belongs to the long-chain O-acyltransferase family.

It catalyses the reaction an acyl-CoA + a 1,2-diacyl-sn-glycerol = a triacyl-sn-glycerol + CoA. The enzyme catalyses a long chain fatty alcohol + a fatty acyl-CoA = a wax ester + CoA. Its pathway is glycerolipid metabolism; triacylglycerol biosynthesis. In terms of biological role, catalyzes the terminal and only committed step in triacylglycerol synthesis by using diacylglycerol and fatty acyl CoA as substrates. Required for storage lipid synthesis. The sequence is that of Probable diacyglycerol O-acyltransferase tgs2 (tgs2) from Mycobacterium tuberculosis (strain CDC 1551 / Oshkosh).